The sequence spans 371 residues: Poly(rC)-binding protein 3 (371 aa).

KH domains are found at residues 45-95 (TLTI…TITG), 129-182 (PVTL…TISG), and 293-357 (ASTH…QYLI).

The protein localises to the cytoplasm. Single-stranded nucleic acid binding protein that binds preferentially to oligo dC. This Homo sapiens (Human) protein is Poly(rC)-binding protein 3.